The sequence spans 86 residues: Neurotoxin LmNaTx34.1 (86 aa).

An N-terminal signal peptide occupies residues 1-18; sequence MKTVILVVIALMVIEVQG. The LCN-type CS-alpha/beta domain maps to 19 to 85; sequence DGYLMVRAGI…IWTYEKNTCS (67 aa). Disulfide bonds link Cys32–Cys84, Cys36–Cys57, Cys43–Cys64, and Cys47–Cys66.

This sequence belongs to the long (4 C-C) scorpion toxin superfamily. Sodium channel inhibitor family. Beta subfamily. Expressed by the venom gland.

It localises to the secreted. Binds voltage-independently at site-4 of sodium channels (Nav) and shift the voltage of activation toward more negative potentials thereby affecting sodium channel activation and promoting spontaneous and repetitive firing. The protein is Neurotoxin LmNaTx34.1 of Lychas mucronatus (Chinese swimming scorpion).